Reading from the N-terminus, the 213-residue chain is Thymidylate kinase (213 aa).

10–17 lines the ATP pocket; that stretch reads GLEGAGKT.

It belongs to the thymidylate kinase family.

It carries out the reaction dTMP + ATP = dTDP + ADP. Its function is as follows. Phosphorylation of dTMP to form dTDP in both de novo and salvage pathways of dTTP synthesis. This Escherichia coli O6:H1 (strain CFT073 / ATCC 700928 / UPEC) protein is Thymidylate kinase.